A 506-amino-acid polypeptide reads, in one-letter code: 7,8-dihydro-6-hydroxymethylpterin dimethyltransferase (506 aa).

[4Fe-4S] cluster contacts are provided by Cys-73, Cys-77, Cys-80, Cys-98, Cys-102, and Cys-105. The 219-residue stretch at 82–300 (NHKSTTILAN…FIKLVEEQTD (219 aa)) folds into the Radical SAM core domain.

It belongs to the radical SAM superfamily. It depends on [4Fe-4S] cluster as a cofactor. S-adenosyl-L-methionine serves as cofactor.

The protein operates within cofactor biosynthesis; 5,6,7,8-tetrahydromethanopterin biosynthesis. Functionally, is responsible for the addition of methyl groups at C-7 and C-9 of the pterin ring during methanopterin (MPT) biosynthesis. Catalyzes methylation of 7,8-dihydro-6-hydroxymethylpterin, likely using methylenetetrahydromethanopterin as a methyl group donor, via a radical-based mechanism. The sequence is that of 7,8-dihydro-6-hydroxymethylpterin dimethyltransferase from Methanocaldococcus jannaschii (strain ATCC 43067 / DSM 2661 / JAL-1 / JCM 10045 / NBRC 100440) (Methanococcus jannaschii).